The chain runs to 358 residues: Phospho-N-acetylmuramoyl-pentapeptide-transferase (358 aa).

The next 10 helical transmembrane spans lie at Tyr19–Gly39, Thr71–Leu91, Tyr95–Tyr115, Leu126–Leu146, Val166–Ser186, Gly194–Ala214, Leu237–Tyr257, Val261–Leu281, Ile286–Val306, and Val336–Lys356.

Belongs to the glycosyltransferase 4 family. MraY subfamily. Requires Mg(2+) as cofactor.

It is found in the cell inner membrane. It catalyses the reaction UDP-N-acetyl-alpha-D-muramoyl-L-alanyl-gamma-D-glutamyl-meso-2,6-diaminopimeloyl-D-alanyl-D-alanine + di-trans,octa-cis-undecaprenyl phosphate = di-trans,octa-cis-undecaprenyl diphospho-N-acetyl-alpha-D-muramoyl-L-alanyl-D-glutamyl-meso-2,6-diaminopimeloyl-D-alanyl-D-alanine + UMP. It functions in the pathway cell wall biogenesis; peptidoglycan biosynthesis. In terms of biological role, catalyzes the initial step of the lipid cycle reactions in the biosynthesis of the cell wall peptidoglycan: transfers peptidoglycan precursor phospho-MurNAc-pentapeptide from UDP-MurNAc-pentapeptide onto the lipid carrier undecaprenyl phosphate, yielding undecaprenyl-pyrophosphoryl-MurNAc-pentapeptide, known as lipid I. The sequence is that of Phospho-N-acetylmuramoyl-pentapeptide-transferase from Pseudoalteromonas atlantica (strain T6c / ATCC BAA-1087).